The sequence spans 495 residues: ATP synthase subunit beta, chloroplastic (495 aa).

172-179 (GGAGVGKT) serves as a coordination point for ATP.

Belongs to the ATPase alpha/beta chains family. F-type ATPases have 2 components, CF(1) - the catalytic core - and CF(0) - the membrane proton channel. CF(1) has five subunits: alpha(3), beta(3), gamma(1), delta(1), epsilon(1). CF(0) has four main subunits: a(1), b(1), b'(1) and c(9-12).

The protein resides in the plastid. The protein localises to the chloroplast thylakoid membrane. The catalysed reaction is ATP + H2O + 4 H(+)(in) = ADP + phosphate + 5 H(+)(out). Its function is as follows. Produces ATP from ADP in the presence of a proton gradient across the membrane. The catalytic sites are hosted primarily by the beta subunits. The polypeptide is ATP synthase subunit beta, chloroplastic (Scilla siberica (Siberian squill)).